The following is a 550-amino-acid chain: Hydroxylamine reductase (550 aa).

[2Fe-2S] cluster is bound by residues C3, C6, C18, and C25. Hybrid [4Fe-2O-2S] cluster-binding residues include H249, E273, C317, C405, C433, C458, E492, and K494. At C405 the chain carries Cysteine persulfide.

This sequence belongs to the HCP family. [2Fe-2S] cluster serves as cofactor. The cofactor is hybrid [4Fe-2O-2S] cluster.

It localises to the cytoplasm. The catalysed reaction is A + NH4(+) + H2O = hydroxylamine + AH2 + H(+). Inhibited by oxygen. Activated by cyanide except in the prolonged presence of excess cyanide, where the enzyme is inactivated. Catalyzes the reduction of hydroxylamine to form NH(3) and H(2)O. Is also able to reduce hydroxylamine analogs such as methylhydroxylamine and hydroxyquinone. Might have a role as a scavenger of potentially toxic by-products of nitrate metabolism. The polypeptide is Hydroxylamine reductase (Escherichia coli (strain K12)).